The following is an 889-amino-acid chain: Alanine--tRNA ligase (889 aa).

The Zn(2+) site is built by His566, His570, Cys683, and His687.

This sequence belongs to the class-II aminoacyl-tRNA synthetase family. Zn(2+) serves as cofactor.

The protein resides in the cytoplasm. It catalyses the reaction tRNA(Ala) + L-alanine + ATP = L-alanyl-tRNA(Ala) + AMP + diphosphate. Its function is as follows. Catalyzes the attachment of alanine to tRNA(Ala) in a two-step reaction: alanine is first activated by ATP to form Ala-AMP and then transferred to the acceptor end of tRNA(Ala). Also edits incorrectly charged Ser-tRNA(Ala) and Gly-tRNA(Ala) via its editing domain. The sequence is that of Alanine--tRNA ligase from Herpetosiphon aurantiacus (strain ATCC 23779 / DSM 785 / 114-95).